The sequence spans 243 residues: 3-deoxy-manno-octulosonate cytidylyltransferase (243 aa).

It belongs to the KdsB family.

The protein resides in the cytoplasm. The enzyme catalyses 3-deoxy-alpha-D-manno-oct-2-ulosonate + CTP = CMP-3-deoxy-beta-D-manno-octulosonate + diphosphate. It participates in nucleotide-sugar biosynthesis; CMP-3-deoxy-D-manno-octulosonate biosynthesis; CMP-3-deoxy-D-manno-octulosonate from 3-deoxy-D-manno-octulosonate and CTP: step 1/1. Its pathway is bacterial outer membrane biogenesis; lipopolysaccharide biosynthesis. Activates KDO (a required 8-carbon sugar) for incorporation into bacterial lipopolysaccharide in Gram-negative bacteria. This Helicobacter pylori (strain ATCC 700392 / 26695) (Campylobacter pylori) protein is 3-deoxy-manno-octulosonate cytidylyltransferase.